Consider the following 396-residue polypeptide: Cathepsin D (396 aa).

The signal sequence occupies residues 1 to 18; sequence MKFLYLFLFAVFAWTSDA. A propeptide spans 19-61 (activation peptide); that stretch reads IVRIPLKKFRSIRRTLSDSGLNVEQLLAGTNSLQHNQGFPSSN. Residues 76-393 form the Peptidase A1 domain; the sequence is YYGEIGLGTP…DRESNRVGFA (318 aa). Asp-94 is a catalytic residue. Cys-107 and Cys-114 are disulfide-bonded. Asn-131 is a glycosylation site (N-linked (GlcNAc...) asparagine). Cys-272 and Cys-276 are oxidised to a cystine. Asp-281 is an active-site residue. Residues Cys-315 and Cys-352 are joined by a disulfide bond.

This sequence belongs to the peptidase A1 family. As to quaternary structure, monomer.

The protein resides in the lysosome. It catalyses the reaction Specificity similar to, but narrower than, that of pepsin A. Does not cleave the 4-Gln-|-His-5 bond in B chain of insulin.. Its activity is regulated as follows. Inhibited by pepstatin. Acid protease active in intracellular protein breakdown. The polypeptide is Cathepsin D (ctsd) (Clupea harengus (Atlantic herring)).